Consider the following 56-residue polypeptide: MAKKSGDVRPKITLACTECKERNYITKKNRRNNPDRMEMAKFCPRCRKHTAHRETR.

It belongs to the bacterial ribosomal protein bL33 family.

This chain is Large ribosomal subunit protein bL33A, found in Cutibacterium acnes (strain DSM 16379 / KPA171202) (Propionibacterium acnes).